A 196-amino-acid polypeptide reads, in one-letter code: FMN-dependent NADH:quinone oxidoreductase (196 aa).

FMN is bound by residues Ser-10, 16 to 18 (SQS), 93 to 96 (MYNF), and 137 to 140 (TRGG).

It belongs to the azoreductase type 1 family. Homodimer. It depends on FMN as a cofactor.

It carries out the reaction 2 a quinone + NADH + H(+) = 2 a 1,4-benzosemiquinone + NAD(+). It catalyses the reaction N,N-dimethyl-1,4-phenylenediamine + anthranilate + 2 NAD(+) = 2-(4-dimethylaminophenyl)diazenylbenzoate + 2 NADH + 2 H(+). In terms of biological role, quinone reductase that provides resistance to thiol-specific stress caused by electrophilic quinones. Functionally, also exhibits azoreductase activity. Catalyzes the reductive cleavage of the azo bond in aromatic azo compounds to the corresponding amines. This chain is FMN-dependent NADH:quinone oxidoreductase, found in Shewanella amazonensis (strain ATCC BAA-1098 / SB2B).